A 1377-amino-acid polypeptide reads, in one-letter code: DNA-directed RNA polymerase subunit beta (1377 aa).

It belongs to the RNA polymerase beta chain family. In terms of assembly, the RNAP catalytic core consists of 2 alpha, 1 beta, 1 beta' and 1 omega subunit. When a sigma factor is associated with the core the holoenzyme is formed, which can initiate transcription.

It catalyses the reaction RNA(n) + a ribonucleoside 5'-triphosphate = RNA(n+1) + diphosphate. DNA-dependent RNA polymerase catalyzes the transcription of DNA into RNA using the four ribonucleoside triphosphates as substrates. The protein is DNA-directed RNA polymerase subunit beta of Cereibacter sphaeroides (strain ATCC 17029 / ATH 2.4.9) (Rhodobacter sphaeroides).